Here is a 233-residue protein sequence, read N- to C-terminus: Large ribosomal subunit protein uL1 (233 aa).

This sequence belongs to the universal ribosomal protein uL1 family. As to quaternary structure, part of the 50S ribosomal subunit.

Functionally, binds directly to 23S rRNA. The L1 stalk is quite mobile in the ribosome, and is involved in E site tRNA release. Protein L1 is also a translational repressor protein, it controls the translation of the L11 operon by binding to its mRNA. This chain is Large ribosomal subunit protein uL1, found in Geobacillus thermodenitrificans (strain NG80-2).